A 311-amino-acid polypeptide reads, in one-letter code: Aquaporin Lacbi1:392091 (311 aa).

At 1–16 the chain is on the cytoplasmic side; it reads MHPQVASLFDNVYEDL. A helical transmembrane segment spans residues 17 to 37; that stretch reads AAATLEFIGTAFFLLFGLGGI. The Extracellular portion of the chain corresponds to 38–56; it reads QASTAEDTASGQPPASGIE. Residues 57–77 traverse the membrane as a helical segment; it reads HVLYISTCMGLSLVVSAWLFF. Position 78 (R78) is a topological domain, cytoplasmic. A helical membrane pass occupies residues 79 to 99; that stretch reads VTGGLFNPNISFALLLVGGLK. The NPA 1 motif lies at 85–87; it reads NPN. Position 100 (P100) is a topological domain, extracellular. The chain crosses the membrane as a helical span at residues 101 to 121; that stretch reads LRFVLFCIAQLTGAIAGAAIV. Residues 122–143 lie on the Cytoplasmic side of the membrane; the sequence is RGLTSAPLSVNNVLQQGTSAAQ. The helical transmembrane segment at 144 to 164 threads the bilayer; the sequence is GVFIEMFITAALVLSVLMLAA. The Extracellular portion of the chain corresponds to 165 to 168; it reads EKHE. The helical transmembrane segment at 169–189 threads the bilayer; the sequence is ATPFAPVGIGLTLFACHLFAV. Residues 190–215 are Cytoplasmic-facing; sequence YYTGAAMNSARAFGPAVISGFPEPQH. The NPA 2 signature appears at 197-199; sequence NSA. Residues 216-236 traverse the membrane as a helical segment; the sequence is WVYWVGPFLGSLLGAGFYATL. Topologically, residues 237–311 are extracellular; it reads KHYKYWHLNP…TSSRTNFSPV (75 aa). The disordered stretch occupies residues 276-311; it reads DEETRNGCASNEEGVRATGDEKSSNATSSRTNFSPV. Residues 288–298 are compositionally biased toward basic and acidic residues; the sequence is EGVRATGDEKS. Residues 299–311 are compositionally biased toward polar residues; it reads SNATSSRTNFSPV. A glycan (N-linked (GlcNAc...) asparagine) is linked at N300.

The protein belongs to the MIP/aquaporin (TC 1.A.8) family.

It localises to the membrane. The enzyme catalyses H2O(in) = H2O(out). The catalysed reaction is NH4(+)(in) = NH4(+)(out). Its function is as follows. Water channel required to facilitate the transport of water across membranes. Also enables low but statistically significant ammonium permeability. May be involved in fungal nitrogen (ammonium) support of the plant host in symbiosis. This chain is Aquaporin Lacbi1:392091, found in Laccaria bicolor (strain S238N-H82 / ATCC MYA-4686) (Bicoloured deceiver).